Consider the following 30-residue polypeptide: Alanine carboxypeptidase (30 aa).

It catalyses the reaction Release of a C-terminal alanine from a peptide or a variety of pteroyl or acyl groups.. The sequence is that of Alanine carboxypeptidase from Geobacillus stearothermophilus (Bacillus stearothermophilus).